We begin with the raw amino-acid sequence, 365 residues long: tRNA/tmRNA (uracil-C(5))-methyltransferase (365 aa).

Positions 189, 217, 222, 238, and 298 each coordinate S-adenosyl-L-methionine. Residue cysteine 323 is the Nucleophile of the active site. The active-site Proton acceptor is the glutamate 357.

Belongs to the class I-like SAM-binding methyltransferase superfamily. RNA M5U methyltransferase family. TrmA subfamily.

The enzyme catalyses uridine(54) in tRNA + S-adenosyl-L-methionine = 5-methyluridine(54) in tRNA + S-adenosyl-L-homocysteine + H(+). It catalyses the reaction uridine(341) in tmRNA + S-adenosyl-L-methionine = 5-methyluridine(341) in tmRNA + S-adenosyl-L-homocysteine + H(+). In terms of biological role, dual-specificity methyltransferase that catalyzes the formation of 5-methyluridine at position 54 (m5U54) in all tRNAs, and that of position 341 (m5U341) in tmRNA (transfer-mRNA). This Shewanella sp. (strain W3-18-1) protein is tRNA/tmRNA (uracil-C(5))-methyltransferase.